Consider the following 202-residue polypeptide: Phosphatidyl-N-methylethanolamine N-methyltransferase (202 aa).

Topologically, residues 1–12 (MTTLSDYVDFSQ) are lumenal. Positions 13–33 (DSFKYAALSIAFNPIFWNVVA) form an intramembrane region, helical. The Lumenal segment spans residues 34–45 (RAEYRSHFLTRI). A helical membrane pass occupies residues 46–66 (FGSPYRGCYFLAITIFSLGIL). Topologically, residues 67–90 (RDHIYQQALEDQPYYAPVHQPVLG) are cytoplasmic. A helical transmembrane segment spans residues 91-111 (GALFAVGSVLVLSSMYALGVT). 95-97 (AVG) lines the S-adenosyl-L-methionine pocket. Residues 112-154 (GTYLGDYFGILMDAPVTGFPFNVTGSPMYWGSTLNFLGVALYK) lie on the Lumenal side of the membrane. Residues 155 to 175 (GKVAGILLTALVFVLYWFALK) traverse the membrane as a helical segment. Topologically, residues 176–202 (WEDPFTAEIYAKRERERAKSKRGGKNQ) are cytoplasmic. 177 to 178 (ED) provides a ligand contact to S-adenosyl-L-methionine.

The protein belongs to the class VI-like SAM-binding methyltransferase superfamily. PEMT/PEM2 methyltransferase family.

It localises to the endoplasmic reticulum membrane. The protein resides in the mitochondrion membrane. It catalyses the reaction a 1,2-diacyl-sn-glycero-3-phospho-N-methylethanolamine + S-adenosyl-L-methionine = a 1,2-diacyl-sn-glycero-3-phospho-N,N-dimethylethanolamine + S-adenosyl-L-homocysteine + H(+). It carries out the reaction a 1,2-diacyl-sn-glycero-3-phospho-N,N-dimethylethanolamine + S-adenosyl-L-methionine = a 1,2-diacyl-sn-glycero-3-phosphocholine + S-adenosyl-L-homocysteine + H(+). Its pathway is phospholipid metabolism; phosphatidylcholine biosynthesis. Its function is as follows. Catalyzes the second two steps of the methylation pathway of phosphatidylcholine biosynthesis, the SAM-dependent methylation of phosphatidylmonomethylethanolamine (PMME) to phosphatidyldimethylethanolamine (PDME) and of PDME to phosphatidylcholine (PC). The protein is Phosphatidyl-N-methylethanolamine N-methyltransferase of Emericella nidulans (strain FGSC A4 / ATCC 38163 / CBS 112.46 / NRRL 194 / M139) (Aspergillus nidulans).